Reading from the N-terminus, the 225-residue chain is Uracil-DNA glycosylase 1 (225 aa).

Residue Asp-68 is the Proton acceptor of the active site.

This sequence belongs to the uracil-DNA glycosylase (UDG) superfamily. UNG family.

Its subcellular location is the cytoplasm. It carries out the reaction Hydrolyzes single-stranded DNA or mismatched double-stranded DNA and polynucleotides, releasing free uracil.. Its function is as follows. Excises uracil residues from the DNA which can arise as a result of misincorporation of dUMP residues by DNA polymerase or due to deamination of cytosine. This Streptomyces avermitilis (strain ATCC 31267 / DSM 46492 / JCM 5070 / NBRC 14893 / NCIMB 12804 / NRRL 8165 / MA-4680) protein is Uracil-DNA glycosylase 1 (ung1).